Here is a 310-residue protein sequence, read N- to C-terminus: MRLISKVLVKTNCLEVGMRRAPQWYSHYSTTAGNARVNKKGSKVVPVLTGLALASIFAKKWYDDSQIKKADVTSVAVDASISAFPKKMGPPQWPFSTQYELIGKGVRCVSSITFKAYGLGIYVAAEDKHLVSEVLDSKFLSQAFIDTAAPPSPENSHQDNLRAALNDPAKAPILINNLLDSGIRLMSKNTPIKAGSFKLLMDGTKKSVLKNPDSQSQDKDRLEAGFQELHDCFRSVKGLVARDDDFFIELNKDCSMNLSYYARKKDEFVILGTVKEPLIGKLLFAHYLAAVDPPSPEARKEVIDALVSLS.

A mitochondrion-targeting transit peptide spans 1–20 (MRLISKVLVKTNCLEVGMRR).

This sequence belongs to the AIM18/AIM46 family.

It is found in the mitochondrion. The sequence is that of Altered inheritance of mitochondria protein 46, mitochondrial (AIM46) from Saccharomyces cerevisiae (strain YJM789) (Baker's yeast).